We begin with the raw amino-acid sequence, 790 residues long: DNA ligase 1 (790 aa).

The N-terminal 64 residues, 1–64, are a transit peptide targeting the mitochondrion; sequence MLAIRSSNYL…AFDALMSNAR (64 aa). The segment at 64–142 is disordered; sequence RAAAKKKTPQ…TGAKKAKTLS (79 aa). Positions 68–75 match the Nuclear localization signal 1 motif; the sequence is KKKTPQTT. Positions 116-128 are enriched in polar residues; the sequence is DSANPRSDTSSIA. Positions 337-346 are interaction with target DNA; that stretch reads KLRLGFSGQT. E442 is an ATP binding site. K444 acts as the N6-AMP-lysine intermediate in catalysis. R449 and R465 together coordinate ATP. E497 provides a ligand contact to Mg(2+). Residues 505-512 carry the Nuclear localization signal 2 motif; the sequence is KKKILPFQ. The interval 518–520 is interaction with target DNA; the sequence is ARK. Mg(2+) is bound at residue E596. Positions 601, 614, and 620 each coordinate ATP. The disordered stretch occupies residues 757 to 790; it reads DKKPEEATSSEQIADLYQAQKHNHPSNEVKGDDD. The segment covering 781-790 has biased composition (basic and acidic residues); the sequence is PSNEVKGDDD.

It belongs to the ATP-dependent DNA ligase family. The cofactor is Mg(2+). In terms of tissue distribution, expressed in all vegetative and reproductive tissues.

The protein resides in the mitochondrion. Its subcellular location is the nucleus. The catalysed reaction is ATP + (deoxyribonucleotide)n-3'-hydroxyl + 5'-phospho-(deoxyribonucleotide)m = (deoxyribonucleotide)n+m + AMP + diphosphate.. In terms of biological role, essential protein. DNA ligase that seals nicks in double-stranded DNA during DNA replication, DNA recombination and DNA repair. Involved in repair of both single strand breaks (SSBs) and double strand breaks (DSBs). Required in the endosperm for embryogenesis, probably to repair DNA-breaks generated by DME. The protein is DNA ligase 1 (LIG1) of Arabidopsis thaliana (Mouse-ear cress).